Here is a 184-residue protein sequence, read N- to C-terminus: Probable archaeosortase E (184 aa).

The next 4 helical transmembrane spans lie at 27–47 (ILFL…LSYF), 86–106 (VVEE…IIVY), 114–134 (IIGI…IVLI), and 151–171 (IAGY…YLKI). Cys-90 serves as the catalytic Acyl-thioester intermediate. Catalysis depends on Arg-130, which acts as the Proton donor.

This sequence belongs to the exosortase/archaeosortase family. Archaeosortase E subfamily.

It is found in the cell membrane. Its function is as follows. Transpeptidase that recognizes and modifies its substrate by proteolytic cleavage of a sorting signal. Following cleavage, a covalent intermediate is formed via a thioester bond between the archaeosortase and its substrate, which is then transferred and covalently attached to the cell membrane. In Methanocaldococcus jannaschii (strain ATCC 43067 / DSM 2661 / JAL-1 / JCM 10045 / NBRC 100440) (Methanococcus jannaschii), this protein is Probable archaeosortase E.